The primary structure comprises 187 residues: uncharacterized protein (187 aa).

The chain crosses the membrane as a helical span at residues 8-28; that stretch reads FFILLAINFILAAGFVALVLL.

The protein resides in the membrane. This is an uncharacterized protein from Bacillus subtilis (strain 168).